The sequence spans 339 residues: Transcription initiation factor IIB (339 aa).

The TFIIB-type zinc finger occupies Glu-39–Gln-70. Residues Cys-43, Cys-46, Cys-62, and Cys-65 each coordinate Zn(2+). 2 tandem repeats follow at residues Ser-156–Leu-239 and Asp-250–Glu-331.

This sequence belongs to the TFIIB family.

Functionally, stabilizes TBP binding to an archaeal box-A promoter. Also responsible for recruiting RNA polymerase II to the pre-initiation complex (DNA-TBP-TFIIB). The polypeptide is Transcription initiation factor IIB (Methanococcus maripaludis (strain C7 / ATCC BAA-1331)).